The chain runs to 132 residues: Small ribosomal subunit protein uS8 (132 aa).

The protein belongs to the universal ribosomal protein uS8 family. Part of the 30S ribosomal subunit. Contacts proteins S5 and S12.

Functionally, one of the primary rRNA binding proteins, it binds directly to 16S rRNA central domain where it helps coordinate assembly of the platform of the 30S subunit. In Mycobacterium bovis (strain ATCC BAA-935 / AF2122/97), this protein is Small ribosomal subunit protein uS8.